The sequence spans 1893 residues: Plexin-A4 (1893 aa).

The signal sequence occupies residues 1–23 (MKAMPWNWTCLLSHLLVVGMGSS). A Sema domain is found at 24–506 (TLLPRQPPQL…SERQLTRVPV (483 aa)). At 24–1236 (TLLPRQPPQL…IAPDSPLSLP (1213 aa)) the chain is on the extracellular side. 10 disulfide bridges follow: Cys94-Cys103, Cys129-Cys137, Cys283-Cys404, Cys299-Cys355, Cys373-Cys392, Cys509-Cys526, Cys515-Cys557, Cys518-Cys535, Cys529-Cys541, and Cys592-Cys611. In terms of domain architecture, PSI 1 spans 508–558 (SCGQYRSCGECLGSGDPHCGWCVLHNTCTRKERCERSREPRRFASEMKQCV). N-linked (GlcNAc...) asparagine glycosylation occurs at Asn654. 2 PSI domains span residues 654–701 (NCSV…EDCP) and 802–855 (KCGA…SKCT). 4 IPT/TIG domains span residues 857–951 (PRIT…YYFM), 953–1036 (LTLA…FQYV), 1039–1138 (PTIV…FTYY), and 1141–1229 (PVFE…YIAP). Asn1006, Asn1131, and Asn1179 each carry an N-linked (GlcNAc...) asparagine glycan. A helical transmembrane segment spans residues 1237-1257 (AIVSIAVAGGLLIIFIVAVLI). Over 1258–1893 (AYKRKSRESD…QVITLMSLDS (636 aa)) the chain is Cytoplasmic. Lys1349 bears the N6-acetyllysine mark.

This sequence belongs to the plexin family. As to quaternary structure, interacts with NRP1 and NRP2. Expressed in the developing nervous system. Widely expressed in both the central and peripheral nervous systems. Expressed in the peripheral ganglia, somatosensory, olfactory, visual, auditory and equilibrium systems.

It localises to the cell membrane. Functionally, coreceptor for SEMA3A. Necessary for signaling by class 3 semaphorins and subsequent remodeling of the cytoskeleton. Plays a role in axon guidance in the developing nervous system. Class 3 semaphorins bind to a complex composed of a neuropilin and a plexin. The plexin modulates the affinity of the complex for specific semaphorins, and its cytoplasmic domain is required for the activation of down-stream signaling events in the cytoplasm. This Mus musculus (Mouse) protein is Plexin-A4 (Plxna4).